Consider the following 224-residue polypeptide: MNTLNDEAVVERIDKSLARSRVYSLLAIGLGFPDVESHAGFSDGRLMIEMHQALEVCMPGLAEYFSEQIAPRLKLTCSFEDFEALFLTAFETNMPVPSAALYEGVHVQQSNRPGLILELKGFYRNFGLTMDAQGNELEDTLTAELEFMHFLTAKQAQAEMESLSPNAYQRAQRDFLERHLVVWLPLVRAEVNAKVATQFFVALIDLAERFVDAHLEEMLFELNS.

Belongs to the type II DMSO reductase enzyme chaperone family.

It localises to the cytoplasm. In terms of biological role, may function as a system-specific molybdenum chaperone protein essential for the assembly of the perchlorate reductase PcrAB complex prior to its periplasmic translocation via the Tat pathway. The chain is Perchlorate reductase assembly chaperone protein (pcrD) from Dechloromonas aromatica (strain RCB).